We begin with the raw amino-acid sequence, 329 residues long: Biotin synthase (329 aa).

The Radical SAM core domain maps to 38 to 262 (NTIQVSTLLS…IMPHSYIRLS (225 aa)). [4Fe-4S] cluster-binding residues include Cys53, Cys57, and Cys60. [2Fe-2S] cluster-binding residues include Cys97, Cys128, Cys188, and Arg260.

Belongs to the radical SAM superfamily. Biotin synthase family. As to quaternary structure, homodimer. It depends on [4Fe-4S] cluster as a cofactor. Requires [2Fe-2S] cluster as cofactor.

The enzyme catalyses (4R,5S)-dethiobiotin + (sulfur carrier)-SH + 2 reduced [2Fe-2S]-[ferredoxin] + 2 S-adenosyl-L-methionine = (sulfur carrier)-H + biotin + 2 5'-deoxyadenosine + 2 L-methionine + 2 oxidized [2Fe-2S]-[ferredoxin]. It functions in the pathway cofactor biosynthesis; biotin biosynthesis; biotin from 7,8-diaminononanoate: step 2/2. In terms of biological role, catalyzes the conversion of dethiobiotin (DTB) to biotin by the insertion of a sulfur atom into dethiobiotin via a radical-based mechanism. This chain is Biotin synthase, found in Acinetobacter baumannii (strain ACICU).